The chain runs to 774 residues: MVMGNNVEMDIKKLLTPLVKMKNANISMSIKFGEEEEEEWEPMGPTPMPKIPTLRHWDFKLLERYPPFYMPICDLCCLCTFGKCDLSRGKKGACGLNIKAQQARIVLIACCIGAACHAGHSRHLVHHLIETLGRDYPIDLGNEIEVEAPIARTVTGIKPKTLGDLEKILDYCEEQITHLLSAAHTGQEGDYLDFESKALHAGMIDDLAREAGDLAQIVAYNMPKGDEDAPLIELGFGCIDKSKPVILCIGHNVVPGSYILEYLEENSMEDEVEVCGICCTAIDITRVSDKPKVVGPLSRQLMFVRSGVADVVIVDEQCIRTDILEEVLKTGAVLIATNEKMCLGLEDVSHMDEDEIIGYLLRNRAALLLDEKKVGKVAVEVAKIVAKERKDRKTLPDLNEVVELAKQCTECGWCNRNCPNAFKVKEAMALAKQGNFKGFIDLYKRCYGCGRCEAICPRNLPIVSMTTKVGEAYYKDLKFKMRAGRGPIKDVEIRSVGAPIVFGDIPGVVALVGCSNHPNGEEEVAMIAKEFLERKYIVVATGCAAMAIGMWKDKDGKTLYEKYPGEFRAGGLVNCGSCLSNCHITGAAIKIANIFAKVPLRGNYAEVADYILNKVGAVGVAWGAMSQKAAAIATGVNRWGIPVILGPHGAKYRRLYLSNGEKFKVKDKKTGEILEIEPAPEHLIVTAENVKECICMIPKLCMRPNDTPKGRANKIYHYVDVYEKYFGRMPPDLEKFVRTEKDIPFMMKDKIMAYLEEKGWKPLEKYPQDPTILY.

Residues Cys73, Cys76, Cys77, Cys79, Cys84, and Cys94 each coordinate [4Fe-4S] cluster. His117 contributes to the CO binding site. [Ni-4Fe-4S] cluster-binding residues include His251, Cys279, and Cys318. 2 consecutive 4Fe-4S ferredoxin-type domains span residues 398–427 (LNEV…VKEA) and 436–466 (FKGF…VSMT). [4Fe-4S] cluster contacts are provided by Cys408, Cys411, Cys414, Cys418, Cys446, Cys449, Cys452, and Cys456. Residues Cys514, Cys543, and Cys578 each coordinate [Ni-4Fe-4S] cluster.

This sequence belongs to the Ni-containing carbon monoxide dehydrogenase family. In terms of assembly, heterotetramer of two alpha and two epsilon subunits. The ACDS complex is made up of alpha, epsilon, beta, gamma and delta subunits with a probable stoichiometry of (alpha(2)epsilon(2))(4)-beta(8)-(gamma(1)delta(1))(8). [4Fe-4S] cluster serves as cofactor. The cofactor is [Ni-4Fe-4S] cluster.

It carries out the reaction CO + 2 oxidized [2Fe-2S]-[ferredoxin] + H2O = 2 reduced [2Fe-2S]-[ferredoxin] + CO2 + 2 H(+). Part of the ACDS complex that catalyzes the reversible cleavage of acetyl-CoA, allowing autotrophic growth from CO(2). The alpha-epsilon subcomponent functions as a carbon monoxide dehydrogenase. The polypeptide is Acetyl-CoA decarbonylase/synthase complex subunit alpha (Methanocaldococcus jannaschii (strain ATCC 43067 / DSM 2661 / JAL-1 / JCM 10045 / NBRC 100440) (Methanococcus jannaschii)).